Here is a 567-residue protein sequence, read N- to C-terminus: Geranylgeranyl transferase type-2 subunit alpha (567 aa).

PFTA repeat units follow at residues 44 to 78 (LDESVLELTSQILGANPDFATLWNCRREVLQQLET), 88 to 122 (LVKAELGFLESCLRVNPKSYGTWHHRCWLLSRLPE), 124 to 158 (NWARELELCARFLEADERNFHCWDYRRFVAAQAAV), 159 to 193 (APAEELAFTDSLITRNFSNYSSWHYRSCLLPQLHP), 207 to 241 (VLLRELELVQNAFFTDPNDQSAWFYHRWLLGRAEP), and 363 to 397 (VLQSELESCKELQELEPENKWCLLTIILLMRALDP). The residue at position 98 (Ser-98) is a Phosphoserine. LRR repeat units lie at residues 442 to 463 (DVRVLHLAHKDLTVLCHLEQLL), 464 to 486 (LVTHLDLSHNRLRALPPALAALR), 487 to 508 (CLEVLQASDNVLENLDGVANLP), 509 to 530 (RLRELLLCNNRLQQSAALQTLA), and 534 to 555 (RLVFLNLQGNSLCQEEGIRERL).

The protein belongs to the protein prenyltransferase subunit alpha family. In terms of assembly, heterotrimer composed of RABGGTA, RABGGTB and CHM; within this trimer, RABGGTA and RABGGTB form the catalytic component B, while CHM (component A) mediates peptide substrate binding. The Rab GGTase dimer (RGGT) interacts with CHM (component A) prior to Rab protein binding; the association is stabilized by geranylgeranyl pyrophosphate (GGpp). The CHM:RGGT:Rab complex is destabilized by GGpp. Interacts with non-phosphorylated form of RAB8A; phosphorylation of RAB8A at 'Thr-72' disrupts this interaction.

It catalyses the reaction geranylgeranyl diphosphate + L-cysteinyl-[protein] = S-geranylgeranyl-L-cysteinyl-[protein] + diphosphate. Its activity is regulated as follows. The enzymatic reaction requires the aid of a Rab escort protein (also called component A), such as CHM. Its function is as follows. Catalyzes the transfer of a geranylgeranyl moiety from geranylgeranyl diphosphate to both cysteines of Rab proteins with the C-terminal sequence -XXCC, -XCXC and -CCXX, such as RAB1A, RAB3A, RAB5A and RAB7A. This chain is Geranylgeranyl transferase type-2 subunit alpha (Rabggta), found in Mus musculus (Mouse).